A 116-amino-acid chain; its full sequence is Iron-sulfur cluster insertion protein ErpA (116 aa).

C44, C108, and C110 together coordinate iron-sulfur cluster.

This sequence belongs to the HesB/IscA family. In terms of assembly, homodimer. The cofactor is iron-sulfur cluster.

Required for insertion of 4Fe-4S clusters for at least IspG. This is Iron-sulfur cluster insertion protein ErpA from Shewanella halifaxensis (strain HAW-EB4).